The primary structure comprises 242 residues: N-alpha-acetyltransferase 60 (242 aa).

Topologically, residues 1–192 (MTEAVPSSAL…GGHPPWTILD (192 aa)) are cytoplasmic. In terms of domain architecture, N-acetyltransferase spans 13-182 (VSLRLLCHDD…DGFTYVLYIN (170 aa)). A substrate-binding site is contributed by Tyr38. Residue Lys79 is modified to N6-acetyllysine; by autocatalysis. Tyr97 is an active-site residue. Leu99 serves as a coordination point for substrate. Position 101-103 (101-103 (LGV)) interacts with acetyl-CoA. N6-acetyllysine; by autocatalysis occurs at positions 105, 109, and 121. An acetyl-CoA-binding site is contributed by 109–114 (KHGIGS). His138 is a catalytic residue. Residues Asn143 and 150–153 (YENR) contribute to the acetyl-CoA site. The residue at position 156 (Lys156) is an N6-acetyllysine; by autocatalysis. Residues 162 to 173 (PYYYSIRGVLKD) form a required for homodimerization region. Tyr165 is a substrate binding site. Positions 193–236 (YIQHLGSALANLSPCSIPHRIYRQAQSLLCSFLPWSSISTKGGI) form an intramembrane region, helical. Over 237–242 (EYSRTM) the chain is Cytoplasmic.

Belongs to the acetyltransferase family. NAA60 subfamily. Monomer and homodimer; monomer in presence of substrate and homodimer in its absence. Post-translationally, acetylated: autoacetylation is required for optimal acetyltransferase activity.

It localises to the golgi apparatus membrane. The enzyme catalyses N-terminal L-methionyl-[transmembrane protein] + acetyl-CoA = N-terminal N(alpha)-acetyl-L-methionyl-[transmembrane protein] + CoA + H(+). It carries out the reaction L-lysyl-[protein] + acetyl-CoA = N(6)-acetyl-L-lysyl-[protein] + CoA + H(+). Functionally, N-alpha-acetyltransferase that specifically mediates the acetylation of N-terminal residues of the transmembrane proteins, with a strong preference for N-termini facing the cytosol. Displays N-terminal acetyltransferase activity towards a range of N-terminal sequences including those starting with Met-Lys, Met-Val, Met-Ala and Met-Met. Required for normal chromosomal segregation during anaphase. May also show histone acetyltransferase activity; such results are however unclear in vivo and would require additional experimental evidences. In Bos taurus (Bovine), this protein is N-alpha-acetyltransferase 60 (NAA60).